Here is a 69-residue protein sequence, read N- to C-terminus: Putative defensin-like protein 312 (69 aa).

The signal sequence occupies residues 1–19 (MSCFSFLVYFLLFIVTKMS). A disulfide bridge connects residues Cys45 and Cys57.

This sequence belongs to the DEFL family.

The protein resides in the secreted. The protein is Putative defensin-like protein 312 of Arabidopsis thaliana (Mouse-ear cress).